The sequence spans 139 residues: MPDLSAALCRCGAQRSPRVSTHSTGPSMGLPTLEVSARSRTWTTIHFSLQRPTSMTRSAMYLLETVSQCSHFLLEATCLMLDLAMKFQALLESRDALPPTDLGTTMPTTNRSRSARPTPRPMGSTSTQQHPQRSRSTCR.

Positions 94–139 (RDALPPTDLGTTMPTTNRSRSARPTPRPMGSTSTQQHPQRSRSTCR) are disordered. Over residues 102-112 (LGTTMPTTNRS) the composition is skewed to polar residues.

This chain is Protein VP5 (VP5), found in Channa lucius (Forest snakehead).